Here is a 218-residue protein sequence, read N- to C-terminus: Redox-sensing transcriptional repressor Rex (218 aa).

Positions 25–64 (WYLSYVQLLHADGCESVSSTRIARAVGVDASLVAKDLSYV) form a DNA-binding region, H-T-H motif. 99–104 (GVGSLG) contacts NAD(+).

Belongs to the transcriptional regulatory Rex family. As to quaternary structure, homodimer.

The protein localises to the cytoplasm. Its function is as follows. Modulates transcription in response to changes in cellular NADH/NAD(+) redox state. The sequence is that of Redox-sensing transcriptional repressor Rex from Porphyromonas gingivalis (strain ATCC 33277 / DSM 20709 / CIP 103683 / JCM 12257 / NCTC 11834 / 2561).